The sequence spans 194 residues: Peptidyl-tRNA hydrolase (194 aa).

Y16 is a binding site for tRNA. The active-site Proton acceptor is the H21. Residues F67, N69, and N115 each contribute to the tRNA site.

It belongs to the PTH family. Monomer.

The protein localises to the cytoplasm. It carries out the reaction an N-acyl-L-alpha-aminoacyl-tRNA + H2O = an N-acyl-L-amino acid + a tRNA + H(+). Its function is as follows. Hydrolyzes ribosome-free peptidyl-tRNAs (with 1 or more amino acids incorporated), which drop off the ribosome during protein synthesis, or as a result of ribosome stalling. Functionally, catalyzes the release of premature peptidyl moieties from peptidyl-tRNA molecules trapped in stalled 50S ribosomal subunits, and thus maintains levels of free tRNAs and 50S ribosomes. This chain is Peptidyl-tRNA hydrolase, found in Colwellia psychrerythraea (strain 34H / ATCC BAA-681) (Vibrio psychroerythus).